Here is a 330-residue protein sequence, read N- to C-terminus: Solute carrier family 25 member 16 (330 aa).

3 Solcar repeats span residues 32–118, 126–214, and 236–326; these read FYWL…YKTL, SGHV…LKSV, and LKTH…MKQF. Transmembrane regions (helical) follow at residues 33–52, 95–112, 132–149, 189–209, 242–262, and 297–317; these read YWLR…KTTV, GAMM…FMAF, LMAG…TYPL, GLMP…FTFG, LLCG…FDVT, and GLYR…AVAF.

The protein belongs to the mitochondrial carrier (TC 2.A.29) family. Mostly in thyroid, liver, lung, kidney and to a lesser extent in heart and skeletal muscle.

The protein localises to the mitochondrion inner membrane. In terms of biological role, may be involved in the transport of coenzyme A in the mitochondrial matrix. Very little is known about the physiological function of this carrier. The protein is Solute carrier family 25 member 16 (SLC25A16) of Bos taurus (Bovine).